The following is a 153-amino-acid chain: UPF0260 protein YcgN (153 aa).

The protein belongs to the UPF0260 family.

This Salmonella agona (strain SL483) protein is UPF0260 protein YcgN.